Here is a 172-residue protein sequence, read N- to C-terminus: Outer-membrane lipoprotein carrier protein (172 aa).

Residues 1–16 form the signal peptide; that stretch reads MRIALLWVAFGALALA.

Belongs to the LolA family. Monomer.

The protein localises to the periplasm. Its function is as follows. Participates in the translocation of lipoproteins from the inner membrane to the outer membrane. Only forms a complex with a lipoprotein if the residue after the N-terminal Cys is not an aspartate (The Asp acts as a targeting signal to indicate that the lipoprotein should stay in the inner membrane). The sequence is that of Outer-membrane lipoprotein carrier protein from Wolinella succinogenes (strain ATCC 29543 / DSM 1740 / CCUG 13145 / JCM 31913 / LMG 7466 / NCTC 11488 / FDC 602W) (Vibrio succinogenes).